The chain runs to 268 residues: Xyloglucan endotransglucosylase protein 7 (268 aa).

The 196-residue stretch at 1-196 (MNAEGGNLHR…WTKAPFTASY (196 aa)) folds into the GH16 domain. Glu82 (nucleophile) is an active-site residue. Glu86 acts as the Proton donor in catalysis. Position 86 (Glu86) interacts with xyloglucan. The N-linked (GlcNAc...) asparagine glycan is linked to Asn90. Xyloglucan contacts are provided by residues 99–101 (HTN), 109–111 (NRE), 175–176 (DW), and Gly180. Cystine bridges form between Cys204–Cys213 and Cys251–Cys265. Arg256 serves as a coordination point for xyloglucan.

Belongs to the glycosyl hydrolase 16 family. XTH group 2 subfamily. Post-translationally, contains at least one intrachain disulfide bond essential for its enzymatic activity. Expressed at a very high level in flowers and stems (picked at anthesis), and at a lower level in ripe leaves and fruits.

The protein resides in the cytoplasm. The catalysed reaction is breaks a beta-(1-&gt;4) bond in the backbone of a xyloglucan and transfers the xyloglucanyl segment on to O-4 of the non-reducing terminal glucose residue of an acceptor, which can be a xyloglucan or an oligosaccharide of xyloglucan.. Its function is as follows. Catalyzes xyloglucan endotransglycosylation (XET). Cleaves and religates xyloglucan polymers. Does not catalyze xyloglucan endohydrolysis (XEH). Probably involved in cell wall assembly and synthesis in fast growing tissues and in the maintenance of firmness in mature fruits. In Diospyros kaki (Kaki persimmon), this protein is Xyloglucan endotransglucosylase protein 7.